The chain runs to 470 residues: Serine hydroxymethyltransferase, cytosolic (470 aa).

Positions 1–11 are enriched in polar residues; the sequence is MSAYALSQSHR. Residues 1 to 23 are disordered; it reads MSAYALSQSHRQLTEGHLKDTDP. An N-acetylserine modification is found at Ser-2. A compositionally biased stretch (basic and acidic residues) spans 12 to 23; it reads QLTEGHLKDTDP. Lys-249 is subject to N6-(pyridoxal phosphate)lysine.

The protein belongs to the SHMT family. In terms of assembly, homotetramer. It depends on pyridoxal 5'-phosphate as a cofactor.

Its subcellular location is the cytoplasm. The enzyme catalyses (6R)-5,10-methylene-5,6,7,8-tetrahydrofolate + glycine + H2O = (6S)-5,6,7,8-tetrahydrofolate + L-serine. It functions in the pathway one-carbon metabolism; tetrahydrofolate interconversion. Interconversion of serine and glycine. This Candida albicans (strain SC5314 / ATCC MYA-2876) (Yeast) protein is Serine hydroxymethyltransferase, cytosolic (SHM2).